Reading from the N-terminus, the 807-residue chain is 85/88 kDa calcium-independent phospholipase A2 (807 aa).

Ser13 is modified (phosphoserine). ANK repeat units lie at residues Trp120–Thr147, Glu151–Val181, Lys185–Gln215, Gln219–Ile248, Pro251–Ser281, Tyr286–Ser312, Ser316–Ala345, His349–Thr378, and Phe382–Leu403. The next 2 helical transmembrane spans lie at Leu481–Ile501 and Leu512–Ser532. Positions Leu482–Met666 constitute a PNPLA domain. The GXGXXG motif lies at Gly486–Gly491. Positions Gly518–Gly522 match the GXSXG motif. The Nucleophile role is filled by Ser520. Asp653 serves as the catalytic Proton acceptor. A DGA/G motif is present at residues Asp653–Gly655. The interval Arg678–Lys687 is calmodulin-binding (1-9-14 motif). Residues Ala749–Arg760 form a calmodulin-binding (IQ motif) region.

In terms of assembly, homodimer formed by catalytic domains tightly interacting through a large hydrophobic interface. The contact area involves 3 alpha helices, several loops and a part of the beta sheet from each monomer. Both active sites of the dimer are in close proximity adopting an open conformation that provide sufficient space for phospholipid access and favoring cooperativity in deacylation-reacylation reactions. Each monomer has 9 ankyrin repeats stacked side-by-side in an elongated structure oriented outwards from the catalytic core. As to expression, expressed in neurons of central and peripheral nervous system. Highly expressed in Purkinje cells in cerebellum and dorsal and ventral horn neurons in the spinal cord. Expressed in testis (at protein level). Expressed in skeletal muscle (at protein level).

It is found in the cytoplasm. Its subcellular location is the cell membrane. It localises to the mitochondrion. The protein resides in the cell projection. The protein localises to the pseudopodium. The enzyme catalyses a 1,2-diacyl-sn-glycero-3-phosphocholine + H2O = a 1-acyl-sn-glycero-3-phosphocholine + a fatty acid + H(+). The catalysed reaction is a 1-O-alkyl-2-acyl-sn-glycero-3-phosphocholine + H2O = a 1-O-alkyl-sn-glycero-3-phosphocholine + a fatty acid + H(+). It carries out the reaction 1,2-dihexadecanoyl-sn-glycero-3-phosphocholine + H2O = 1-hexadecanoyl-sn-glycero-3-phosphocholine + hexadecanoate + H(+). It catalyses the reaction 1-hexadecanoyl-2-(9Z-octadecenoyl)-sn-glycero-3-phosphocholine + H2O = 1-hexadecanoyl-sn-glycero-3-phosphocholine + (9Z)-octadecenoate + H(+). The enzyme catalyses 1-hexadecanoyl-2-(9Z,12Z-octadecadienoyl)-sn-glycero-3-phosphocholine + H2O = (9Z,12Z)-octadecadienoate + 1-hexadecanoyl-sn-glycero-3-phosphocholine + H(+). The catalysed reaction is 1-hexadecanoyl-2-(5Z,8Z,11Z,14Z-eicosatetraenoyl)-sn-glycero-3-phosphocholine + H2O = 1-hexadecanoyl-sn-glycero-3-phosphocholine + (5Z,8Z,11Z,14Z)-eicosatetraenoate + H(+). It carries out the reaction 1-octadecanoyl-2-(5Z,8Z,11Z,14Z-eicosatetraenoyl)-sn-glycero-3-phosphocholine + H2O = 1-octadecanoyl-sn-glycero-3-phosphocholine + (5Z,8Z,11Z,14Z)-eicosatetraenoate + H(+). It catalyses the reaction 1-hexadecanoyl-2-(5Z,8Z,11Z,14Z-eicosatetraenoyl)-sn-glycero-3-phosphoethanolamine + H2O = 1-hexadecanoyl-sn-glycero-3-phosphoethanolamine + (5Z,8Z,11Z,14Z)-eicosatetraenoate + H(+). The enzyme catalyses 1,2-dihexadecanoyl-sn-glycero-3-phosphate + H2O = 1-hexadecanoyl-sn-glycero-3-phosphate + hexadecanoate + H(+). The catalysed reaction is a 1-acyl-sn-glycero-3-phosphocholine + H2O = sn-glycerol 3-phosphocholine + a fatty acid + H(+). It carries out the reaction 1-hexadecanoyl-sn-glycero-3-phosphocholine + H2O = sn-glycerol 3-phosphocholine + hexadecanoate + H(+). It catalyses the reaction 1-(5Z,8Z,11Z,14Z-eicosatetraenoyl)-sn-glycero-3-phosphocholine + H2O = sn-glycerol 3-phosphocholine + (5Z,8Z,11Z,14Z)-eicosatetraenoate + H(+). The enzyme catalyses 2-(5Z,8Z,11Z,14Z)-eicosatetraenoyl-sn-glycero-3-phosphocholine + H2O = sn-glycerol 3-phosphocholine + (5Z,8Z,11Z,14Z)-eicosatetraenoate + H(+). The catalysed reaction is 1-O-hexadecyl-2-(5Z,8Z,11Z,14Z)-eicosatetraenoyl-sn-glycero-3-phosphocholine + H2O = 1-O-hexadecyl-sn-glycero-3-phosphocholine + (5Z,8Z,11Z,14Z)-eicosatetraenoate + H(+). It carries out the reaction 1-O-hexadecyl-2-acetyl-sn-glycero-3-phosphocholine + H2O = 1-O-hexadecyl-sn-glycero-3-phosphocholine + acetate + H(+). It catalyses the reaction hexadecanoyl-CoA + H2O = hexadecanoate + CoA + H(+). The enzyme catalyses 1',3'-bis[1,2-di-(9Z-octadecenoyl)-sn-glycero-3-phospho]-glycerol + H2O = 1'-[1,2-di-(9Z-octadecenoyl)-sn-glycero-3-phospho]-3'-[1-(9Z-octadecenoyl)-sn-glycero-3-phospho]-glycerol + (9Z)-octadecenoate + H(+). The catalysed reaction is 1'-[1,2-di-(9Z-octadecenoyl)-sn-glycero-3-phospho]-3'-[1-(9Z-octadecenoyl)-sn-glycero-3-phospho]-glycerol + H2O = 1',3'-bis-[1-(9Z-octadecenoyl)-sn-glycero-3-phospho]-glycerol + (9Z)-octadecenoate + H(+). It carries out the reaction 1',3'-bis-[1,2-di-(9Z,12Z-octadecadienoyl)-sn-glycero-3-phospho]-glycerol + H2O = 1'-[1,2-di-(9Z,12Z-octadecadienoyl)-sn-glycero-3-phospho]-3'-[1-(9Z,12Z-octadecadienoyl)-sn-glycero-3-phospho]-glycerol + (9Z,12Z)-octadecadienoate + H(+). It catalyses the reaction 1-octadecanoyl-2-(15-hydroxy-(5Z,8Z,11Z,13E)-eicosatetraenoyl)-sn-glycero-3-phosphoethanolamine + H2O = 1-octadecanoyl-sn-glycero-3-phosphoethanolamine + 15-hydroxy-(5Z,8Z,11Z,13E)-eicosatetraenoate + H(+). Its activity is regulated as follows. Inhibited by calcium-activated calmodulin. Activated by ATP. Inhibited by bromoenol lactone (BEL). Calcium-independent phospholipase involved in phospholipid remodeling with implications in cellular membrane homeostasis, mitochondrial integrity and signal transduction. Hydrolyzes the ester bond of the fatty acyl group attached at sn-1 or sn-2 position of phospholipids (phospholipase A1 and A2 activity respectively), producing lysophospholipids that are used in deacylation-reacylation cycles. Hydrolyzes both saturated and unsaturated long fatty acyl chains in various glycerophospholipid classes such as phosphatidylcholines, phosphatidylethanolamines and phosphatidates, with a preference for hydrolysis at sn-2 position. Can further hydrolyze lysophospholipids carrying saturated fatty acyl chains (lysophospholipase activity). Upon oxidative stress, contributes to remodeling of mitochondrial phospholipids in pancreatic beta cells, in a repair mechanism to reduce oxidized lipid content. Preferentially hydrolyzes oxidized polyunsaturated fatty acyl chains from cardiolipins, yielding monolysocardiolipins that can be reacylated with unoxidized fatty acyls to regenerate native cardiolipin species. Hydrolyzes oxidized glycerophosphoethanolamines present in pancreatic islets, releasing oxidized polyunsaturated fatty acids such as hydroxyeicosatetraenoates (HETEs). Has thioesterase activity toward fatty-acyl CoA releasing CoA-SH known to facilitate fatty acid transport and beta-oxidation in mitochondria particularly in skeletal muscle. Plays a role in regulation of membrane dynamics and homeostasis. Selectively hydrolyzes sn-2 arachidonoyl group in plasmalogen phospholipids, structural components of lipid rafts and myelin. Regulates F-actin polymerization at the pseudopods, which is required for both speed and directionality of MCP1/CCL2-induced monocyte chemotaxis. Targets membrane phospholipids to produce potent lipid signaling messengers. Generates lysophosphatidate (LPA, 1-acyl-glycerol-3-phosphate), which acts via G-protein receptors in various cell types. Has phospholipase A2 activity toward platelet-activating factor (PAF, 1-O-alkyl-2-acetyl-sn-glycero-3-phosphocholine), likely playing a role in inactivation of this potent pro-inflammatory signaling lipid. In response to glucose, amplifies calcium influx in pancreatic beta cells to promote INS secretion. The polypeptide is 85/88 kDa calcium-independent phospholipase A2 (Pla2g6) (Mus musculus (Mouse)).